Here is a 372-residue protein sequence, read N- to C-terminus: Methylthioribose-1-phosphate isomerase 1 (372 aa).

Asp254 acts as the Proton donor in catalysis.

This sequence belongs to the eIF-2B alpha/beta/delta subunits family. MtnA subfamily.

It localises to the cytoplasm. It is found in the nucleus. The enzyme catalyses 5-(methylsulfanyl)-alpha-D-ribose 1-phosphate = 5-(methylsulfanyl)-D-ribulose 1-phosphate. It participates in amino-acid biosynthesis; L-methionine biosynthesis via salvage pathway; L-methionine from S-methyl-5-thio-alpha-D-ribose 1-phosphate: step 1/6. Functionally, catalyzes the interconversion of methylthioribose-1-phosphate (MTR-1-P) into methylthioribulose-1-phosphate (MTRu-1-P). This Trypanosoma cruzi (strain CL Brener) protein is Methylthioribose-1-phosphate isomerase 1.